The chain runs to 535 residues: CTP synthase (535 aa).

Residues 1 to 266 form an amidoligase domain region; sequence MKFVVITGGV…GDYICERLGL (266 aa). CTP is bound at residue serine 12. Serine 12 lines the UTP pocket. Residues 13–18 and aspartate 70 contribute to the ATP site; that span reads GIGKGI. Positions 70 and 140 each coordinate Mg(2+). CTP is bound by residues 147 to 149, 187 to 192, and lysine 223; these read DIE and KTKPTQ. Residues 187–192 and lysine 223 contribute to the UTP site; that span reads KTKPTQ. The 245-residue stretch at 291-535 folds into the Glutamine amidotransferase type-1 domain; that stretch reads RIAVVGKYVD…IKAAAGQGPD (245 aa). Glycine 355 provides a ligand contact to L-glutamine. Cysteine 382 acts as the Nucleophile; for glutamine hydrolysis in catalysis. Residues 383–386, glutamate 406, and arginine 464 each bind L-glutamine; that span reads LGFQ. Residues histidine 508 and glutamate 510 contribute to the active site.

Belongs to the CTP synthase family. As to quaternary structure, homotetramer.

The catalysed reaction is UTP + L-glutamine + ATP + H2O = CTP + L-glutamate + ADP + phosphate + 2 H(+). The enzyme catalyses L-glutamine + H2O = L-glutamate + NH4(+). It catalyses the reaction UTP + NH4(+) + ATP = CTP + ADP + phosphate + 2 H(+). The protein operates within pyrimidine metabolism; CTP biosynthesis via de novo pathway; CTP from UDP: step 2/2. Allosterically activated by GTP, when glutamine is the substrate; GTP has no effect on the reaction when ammonia is the substrate. The allosteric effector GTP functions by stabilizing the protein conformation that binds the tetrahedral intermediate(s) formed during glutamine hydrolysis. Inhibited by the product CTP, via allosteric rather than competitive inhibition. Catalyzes the ATP-dependent amination of UTP to CTP with either L-glutamine or ammonia as the source of nitrogen. Regulates intracellular CTP levels through interactions with the four ribonucleotide triphosphates. The sequence is that of CTP synthase from Methanopyrus kandleri (strain AV19 / DSM 6324 / JCM 9639 / NBRC 100938).